Consider the following 211-residue polypeptide: Peroxiredoxin (211 aa).

The region spanning 2–156 is the Thioredoxin domain; the sequence is PLIGDKFPEM…IVRMIRAFRV (155 aa). Catalysis depends on Cys-44, which acts as the Cysteine sulfenic acid (-SOH) intermediate. A substrate-binding site is contributed by Arg-119. A disulfide bond links Cys-198 and Cys-204.

This sequence belongs to the peroxiredoxin family. Prx6 subfamily. Homodecamer. Pentamer of dimers that assemble into a ring structure.

Its subcellular location is the cytoplasm. The catalysed reaction is a hydroperoxide + [thioredoxin]-dithiol = an alcohol + [thioredoxin]-disulfide + H2O. In terms of biological role, thiol-specific peroxidase that catalyzes the reduction of hydrogen peroxide and organic hydroperoxides to water and alcohols, respectively. Plays a role in cell protection against oxidative stress by detoxifying peroxides. This is Peroxiredoxin from Methanothermobacter marburgensis (strain ATCC BAA-927 / DSM 2133 / JCM 14651 / NBRC 100331 / OCM 82 / Marburg) (Methanobacterium thermoautotrophicum).